Reading from the N-terminus, the 44-residue chain is Conotoxin Sr5.5 (44 aa).

An N-terminal signal peptide occupies residues 1–19 (MRCLPVFVILLLLIASAPS). A propeptide spanning residues 20–29 (VDDNAKGTQH) is cleaved from the precursor.

It belongs to the conotoxin T superfamily. Contains 2 disulfide bonds that can be either 'C1-C3, C2-C4' or 'C1-C4, C2-C3', since these disulfide connectivities have been observed for conotoxins with cysteine framework V (for examples, see AC P0DQQ7 and AC P81755). In terms of tissue distribution, expressed by the venom duct.

The protein resides in the secreted. This Conus spurius (Alphabet cone) protein is Conotoxin Sr5.5.